The following is a 212-amino-acid chain: MESTEKLTDTNAILAYLYETFPLCFIAEGETKPLKIGLFQDLAERLADDSKVSKTQLRIALRRYTSSWRYLKCVKAGAQRIDLDGNACGELEQEHIDHAAATLKESQDKAKAKRVAQAKSANPAAKTAKKPVKKPVAKRPKPAQSSKPAKEPVVAENLTPAVLTELKPNQRVNVKLGKAPVAGVILDIKKEDVQVQLDSGLTIKVRAEHILL.

The disordered stretch occupies residues 107–153; sequence QDKAKAKRVAQAKSANPAAKTAKKPVKKPVAKRPKPAQSSKPAKEPV. Residues 117–126 are compositionally biased toward low complexity; that stretch reads QAKSANPAAK. The span at 127 to 141 shows a compositional bias: basic residues; that stretch reads TAKKPVKKPVAKRPK.

The protein belongs to the ProQ family.

It localises to the cytoplasm. Functionally, RNA chaperone with significant RNA binding, RNA strand exchange and RNA duplexing activities. The protein is RNA chaperone ProQ of Shewanella pealeana (strain ATCC 700345 / ANG-SQ1).